Consider the following 332-residue polypeptide: Autoinducer 2 import system permease protein LsrD (332 aa).

Helical transmembrane passes span 5 to 25, 43 to 63, 83 to 103, 116 to 136, 160 to 180, 210 to 230, and 259 to 279; these read LNWESALLALLIAEILLFGAL, ICIGIVALPLTLVIISGGIDI, GWPLWLAVSLTLLLGLLCGLF, LVITLGTLYLYGGGALLLSGM, LGGLPLPLVLFAIITFFFWLL, IPYVLYGLVGVASAVAALVMV, and IYGGSGSILGTALAALLVGYL.

The protein belongs to the binding-protein-dependent transport system permease family. AraH/RbsC subfamily. In terms of assembly, the complex is composed of two ATP-binding proteins (LsrA), two transmembrane proteins (LsrC and LsrD) and a solute-binding protein (LsrB).

It localises to the cell inner membrane. Functionally, part of the ABC transporter complex LsrABCD involved in autoinducer 2 (AI-2) import. Probably responsible for the translocation of the substrate across the membrane. This is Autoinducer 2 import system permease protein LsrD (lsrD) from Klebsiella pneumoniae subsp. pneumoniae (strain ATCC 700721 / MGH 78578).